A 909-amino-acid polypeptide reads, in one-letter code: Disintegrin and metalloproteinase domain-containing protein 12 (909 aa).

Positions 1–28 are cleaved as a signal peptide; that stretch reads MAARPLPVSPARALLLALAGALLAPCEA. Residues 29-207 constitute a propeptide that is removed on maturation; sequence RGVSLWNQGR…SQTWARRHKR (179 aa). N-linked (GlcNAc...) asparagine glycosylation is found at N111 and N149. Positions 177 to 184 match the Cysteine switch motif; that stretch reads GSCGSHHN. Zn(2+) is bound by residues C179 and H350. At 208-708 the chain is on the extracellular side; it reads ETLKATKYVE…GPIRQADNQG (501 aa). Residues 214–416 enclose the Peptidase M12B domain; the sequence is KYVELVIVAD…GMGVCLFNLP (203 aa). 3 disulfides stabilise this stretch: C325-C411, C367-C395, and C369-C378. E351 is an active-site residue. H354 and H360 together coordinate Zn(2+). N-linked (GlcNAc...) asparagine glycans are attached at residues N381 and N452. The Disintegrin domain maps to 424 to 510; it reads GQKCGNRFVE…HCPANVYLHD (87 aa). Cysteines 482 and 502 form a disulfide. N651 is a glycosylation site (N-linked (GlcNAc...) asparagine). The EGF-like domain maps to 656–688; the sequence is GVHECAMQCHGRGVCNNRKNCHCEAHWAPPFCD. 3 cysteine pairs are disulfide-bonded: C660–C670, C664–C676, and C678–C687. Residues 709–729 traverse the membrane as a helical segment; sequence LTIGILVTILCLLAAGFVVYL. Residues 730–909 are Cytoplasmic-facing; that stretch reads KRKTLIRLLF…PRSTHTAYIK (180 aa). Residues 822 to 862 form a disordered region; it reads LHRAPRAPSVPARPLPAKPALRQAQGTCKPNPPQKPLPADP. The short motif at 828–834 is the SH3-binding; class II element; it reads APSVPAR. The short motif at 834 to 841 is the SH3-binding; class I element; sequence RPLPAKPA. The segment covering 851 to 860 has biased composition (pro residues); sequence PNPPQKPLPA. The short motif at 885-891 is the SH3-binding; class I element; the sequence is RLAPLRP. The residue at position 907 (Y907) is a Phosphotyrosine; by SRC.

As to quaternary structure, interacts with alpha-actinin-2 and with syndecans. Interacts with SH3PXD2A. Interacts with FST3. Interacts with RACK1; the interaction is required for PKC-dependent translocation of ADAM12 to the cell membrane. Zn(2+) is required as a cofactor. In terms of processing, the precursor is cleaved by a furin endopeptidase. As to expression, isoform 1 is expressed in placenta and skeletal, cardiac, and smooth muscle. Isoform 2 seems to be expressed only in placenta or in embryo and fetus. Both forms were expressed in some tumor cells lines. Not detected in brain, lung, liver, kidney or pancreas.

The protein localises to the cell membrane. It is found in the secreted. Functionally, involved in skeletal muscle regeneration, specifically at the onset of cell fusion. Also involved in macrophage-derived giant cells (MGC) and osteoclast formation from mononuclear precursors. This chain is Disintegrin and metalloproteinase domain-containing protein 12 (ADAM12), found in Homo sapiens (Human).